The following is a 294-amino-acid chain: Tetraspanin-15 (294 aa).

Topologically, residues 1–23 (MPRGDSEQVRYCARFSYLWLKFS) are cytoplasmic. A helical membrane pass occupies residues 24–44 (LIIYSTVFWLIGALVLSVGIY). Topologically, residues 45 to 62 (AEVERQKYKTLESAFLAP) are extracellular. The chain crosses the membrane as a helical span at residues 63–83 (AIILILLGVVMFMVSFIGVLA). Topologically, residues 84 to 93 (SLRDNLYLLQ) are cytoplasmic. A helical membrane pass occupies residues 94 to 114 (AFMYILGICLIMELIGGVVAL). The Extracellular portion of the chain corresponds to 115–235 (TFRNQTIDFL…WFMDNYTIMA (121 aa)). N118 carries N-linked (GlcNAc...) asparagine glycosylation. Intrachain disulfides connect C154-C219, C155-C185, C171-C179, and C186-C198. N-linked (GlcNAc...) asparagine glycans are attached at residues N189 and N230. Residues 236–256 (GILLGILLPQFLGVLLTLLYI) form a helical membrane-spanning segment. Over 257-294 (TRVEDIIMEHSVTDGLLGPGAKPSVEAAGTGCCLCYPN) the chain is Cytoplasmic.

It belongs to the tetraspanin (TM4SF) family. In terms of assembly, interacts with ADAM10; the interaction influences ADAM10 substrate specificity, endocytosis and turnover. Palmitoylated.

The protein resides in the cell membrane. The protein localises to the late endosome membrane. Part of TspanC8 subgroup, composed of 6 members that interact with the transmembrane metalloprotease ADAM10. This interaction is required for ADAM10 exit from the endoplasmic reticulum and for enzymatic maturation and trafficking to the cell surface as well as substrate specificity. Different TspanC8/ADAM10 complexes have distinct substrates. Promotes ADAM10-mediated cleavage of CDH2. Negatively regulates ligand-induced Notch activity probably by regulating ADAM10 activity. The sequence is that of Tetraspanin-15 from Homo sapiens (Human).